We begin with the raw amino-acid sequence, 671 residues long: Preterminal protein (671 aa).

Positions 380–389 (RLPVRRRRRR) match the Nuclear localization signal motif. Positions 386–409 (RRRRVPPPPPPPEEEEEGEALMEE) are disordered. The segment covering 397-409 (PEEEEEGEALMEE) has biased composition (acidic residues). S580 is subject to O-(5'-phospho-DNA)-serine. Residues 645-671 (GADVPLPPLPAGPEPPLPPGARPRHRF) are disordered. Over residues 649–665 (PLPPLPAGPEPPLPPGA) the composition is skewed to pro residues.

The protein belongs to the adenoviridae terminal protein family. In terms of assembly, heterodimer with the polymerase; this heterodimer binds to bp 9 to 18 of the genome. Interacts with host POU2F1; POU2F1 binds to the auxiliary sequences in the inverted terminal repeats and tethers the pTP-POL heterodimer to the origin DNA thereby participating in the assembly of the pre-initiation complex (POL-TP-DBP-NFIA-POU2F1). In terms of processing, preterminal protein is used to replicate viral genome, upon genomic encapsidation it is processed first into iTP and finally into TP by adenovirus protease.

It is found in the host nucleus matrix. In terms of biological role, protein covalently bound to the viral DNA that acts as a primer for viral genomic replication by DNA strand displacement. Assembles on the viral origin of replication in an initiation complex with viral polymerase, DBP, host NFIA and host POU2F1/OCT1. During initiation, the polymerase covalently couples the first dCTP with Ser-580 of pTP. The terminal protein stimulates the template activity over 20 fold compared to protein-free templates. Neo-synthesized viral genomes are linked to two preterminal proteins, one for each 5' end. These new genomes are encapsidated in the nucleus, and during capsid maturation by viral protease, preterminal protein is first cleaved into intermediary (iTP), then into mature TP. May play a role in host nuclear matrix localization of genomic DNA. This is Preterminal protein from Homo sapiens (Human).